Here is a 447-residue protein sequence, read N- to C-terminus: Adenylosuccinate synthetase (447 aa).

GTP contacts are provided by residues 12–18 (GDEGKGK) and 40–42 (GHT). The Proton acceptor role is filled by D13. The Mg(2+) site is built by D13 and G40. Residues 13–16 (DEGK), 38–41 (NAGH), T128, R142, Q223, T238, and R302 each bind IMP. Catalysis depends on H41, which acts as the Proton donor. 298–304 (TTTGRRR) contacts substrate. Residues R304, 330 to 332 (KLD), and 412 to 414 (SLG) each bind GTP.

This sequence belongs to the adenylosuccinate synthetase family. As to quaternary structure, homodimer. Mg(2+) serves as cofactor.

It localises to the cytoplasm. The enzyme catalyses IMP + L-aspartate + GTP = N(6)-(1,2-dicarboxyethyl)-AMP + GDP + phosphate + 2 H(+). The protein operates within purine metabolism; AMP biosynthesis via de novo pathway; AMP from IMP: step 1/2. Its function is as follows. Plays an important role in the de novo pathway of purine nucleotide biosynthesis. Catalyzes the first committed step in the biosynthesis of AMP from IMP. This is Adenylosuccinate synthetase from Thermosynechococcus vestitus (strain NIES-2133 / IAM M-273 / BP-1).